The following is a 492-amino-acid chain: RNase aCSPSF2 (492 aa).

A divalent metal cation contacts are provided by histidine 130, histidine 132, aspartate 134, histidine 135, histidine 213, aspartate 234, and histidine 460.

The protein belongs to the metallo-beta-lactamase superfamily. RNA-metabolizing metallo-beta-lactamase-like family. Mg(2+) serves as cofactor.

In terms of biological role, a 5'-3' exoribonuclease, more active on 5'-monophosphorylated and 5'-hydroxylated RNA than 5'-tri-phosphorylated RNA; note there is no evidence for accumulation of 5'-monophosphorylated RNA in this organism. Translation initiation factor 2 subunit gamma but not subunit alpha protects 5'-tri-phosphorylated RNA from degradation by this enzyme. The sequence is that of RNase aCSPSF2 from Saccharolobus solfataricus (strain ATCC 35092 / DSM 1617 / JCM 11322 / P2) (Sulfolobus solfataricus).